A 190-amino-acid chain; its full sequence is MAFIAKSFYDLSAISLDGEKVDFNTFRGRAVLIENVASLUGTTTRDFTQLNELQCRFPRRLVVLGFPCNQFGHQENCQNEEILNSLKYVRPGGGYQPTFTLVQKCEVNGQNEHPVFAYLKDKLPYPYDDPFSLMTDPKLIIWSPVRRSDVAWNFEKFLIGPEGEPFRRYSRTFPTINIEPDIKRLLKVAI.

Residue U40 is part of the active site. Residue U40 is a non-standard amino acid, selenocysteine.

It belongs to the glutathione peroxidase family. In terms of assembly, homotetramer. In terms of tissue distribution, mostly in liver and gastrointestinal tract, not found in heart or kidney.

The protein resides in the cytoplasm. It is found in the cytosol. The catalysed reaction is 2 glutathione + H2O2 = glutathione disulfide + 2 H2O. It catalyses the reaction a hydroperoxy polyunsaturated fatty acid + 2 glutathione = a hydroxy polyunsaturated fatty acid + glutathione disulfide + H2O. It carries out the reaction tert-butyl hydroperoxide + 2 glutathione = tert-butanol + glutathione disulfide + H2O. The enzyme catalyses cumene hydroperoxide + 2 glutathione = 2-phenylpropan-2-ol + glutathione disulfide + H2O. The catalysed reaction is (13S)-hydroperoxy-(9Z,11E)-octadecadienoate + 2 glutathione = (13S)-hydroxy-(9Z,11E)-octadecadienoate + glutathione disulfide + H2O. It catalyses the reaction (5S)-hydroperoxy-(6E,8Z,11Z,14Z)-eicosatetraenoate + 2 glutathione = (5S)-hydroxy-(6E,8Z,11Z,14Z)-eicosatetraenoate + glutathione disulfide + H2O. It carries out the reaction (12R)-hydroperoxy-(5Z,8Z,10E,14Z)-eicosatetraenoate + 2 glutathione = (12R)-hydroxy-(5Z,8Z,10E,14Z)-eicosatetraenoate + glutathione disulfide + H2O. The enzyme catalyses (15S)-hydroperoxy-(5Z,8Z,11Z,13E)-eicosatetraenoate + 2 glutathione = (15S)-hydroxy-(5Z,8Z,11Z,13E)-eicosatetraenoate + glutathione disulfide + H2O. Catalyzes the reduction of hydroperoxides in a glutathione-dependent manner thus regulating cellular redox homeostasis. Can reduce small soluble hydroperoxides such as H2O2, cumene hydroperoxide and tert-butyl hydroperoxide, as well as several fatty acid-derived hydroperoxides. Cannot reduce phosphatidycholine hydroperoxide. This is Glutathione peroxidase 2 from Homo sapiens (Human).